We begin with the raw amino-acid sequence, 108 residues long: MASAVGKGVTAFNTIKNIISELKKVDKTFSPNSAQYKYLMEQMKADQVTTRRYSKAENESESVAKLYLSYIKGTRQLNELQERYKGGEKSVEEAAAIVGLKLPEQKKL.

It belongs to the FMC1 family.

This chain is Protein FMC1 homolog, found in Caenorhabditis elegans.